The chain runs to 243 residues: Ubiquinone/menaquinone biosynthesis C-methyltransferase UbiE (243 aa).

Residues threonine 69, aspartate 90, and aspartate 116–alanine 117 contribute to the S-adenosyl-L-methionine site.

The protein belongs to the class I-like SAM-binding methyltransferase superfamily. MenG/UbiE family.

The catalysed reaction is a 2-demethylmenaquinol + S-adenosyl-L-methionine = a menaquinol + S-adenosyl-L-homocysteine + H(+). It carries out the reaction a 2-methoxy-6-(all-trans-polyprenyl)benzene-1,4-diol + S-adenosyl-L-methionine = a 5-methoxy-2-methyl-3-(all-trans-polyprenyl)benzene-1,4-diol + S-adenosyl-L-homocysteine + H(+). It functions in the pathway quinol/quinone metabolism; menaquinone biosynthesis; menaquinol from 1,4-dihydroxy-2-naphthoate: step 2/2. Its pathway is cofactor biosynthesis; ubiquinone biosynthesis. In terms of biological role, methyltransferase required for the conversion of demethylmenaquinol (DMKH2) to menaquinol (MKH2) and the conversion of 2-polyprenyl-6-methoxy-1,4-benzoquinol (DDMQH2) to 2-polyprenyl-3-methyl-6-methoxy-1,4-benzoquinol (DMQH2). The protein is Ubiquinone/menaquinone biosynthesis C-methyltransferase UbiE of Paraburkholderia xenovorans (strain LB400).